The sequence spans 876 residues: Leucine--tRNA ligase (876 aa).

The 'HIGH' region signature appears at 42-52 (PYPSGKLHMGH). A 'KMSKS' region motif is present at residues 634–638 (KMSKS). Lys-637 serves as a coordination point for ATP.

This sequence belongs to the class-I aminoacyl-tRNA synthetase family.

Its subcellular location is the cytoplasm. It catalyses the reaction tRNA(Leu) + L-leucine + ATP = L-leucyl-tRNA(Leu) + AMP + diphosphate. The sequence is that of Leucine--tRNA ligase from Neisseria meningitidis serogroup C / serotype 2a (strain ATCC 700532 / DSM 15464 / FAM18).